A 552-amino-acid polypeptide reads, in one-letter code: Methyl-coenzyme M reductase II subunit alpha (552 aa).

Gln150 contributes to the coenzyme F430 binding site. Residues Arg228, 259–260 (KH), and Arg273 contribute to the coenzyme B site. Coenzyme M contacts are provided by Tyr335 and Tyr446.

Belongs to the methyl-coenzyme M reductase alpha subunit family. As to quaternary structure, MCR is a hexamer of two alpha, two beta, and two gamma chains, forming a dimer of heterotrimers. It depends on coenzyme F430 as a cofactor.

It carries out the reaction coenzyme B + methyl-coenzyme M = methane + coenzyme M-coenzyme B heterodisulfide. The protein operates within one-carbon metabolism; methyl-coenzyme M reduction; methane from methyl-coenzyme M: step 1/1. Its function is as follows. Component of the methyl-coenzyme M reductase (MCR) I that catalyzes the reductive cleavage of methyl-coenzyme M (CoM-S-CH3 or 2-(methylthio)ethanesulfonate) using coenzyme B (CoB or 7-mercaptoheptanoylthreonine phosphate) as reductant which results in the production of methane and the mixed heterodisulfide of CoB and CoM (CoM-S-S-CoB). This is the final step in methanogenesis. The chain is Methyl-coenzyme M reductase II subunit alpha (mrtA) from Methanocaldococcus jannaschii (strain ATCC 43067 / DSM 2661 / JAL-1 / JCM 10045 / NBRC 100440) (Methanococcus jannaschii).